Consider the following 314-residue polypeptide: tRNA dimethylallyltransferase (314 aa).

Gly-14–Thr-21 contacts ATP. Thr-16–Thr-21 is a binding site for substrate. 3 interaction with substrate tRNA regions span residues Asp-39–Gln-42, Gln-163–Arg-167, and Arg-245–Arg-250.

Belongs to the IPP transferase family. As to quaternary structure, monomer. The cofactor is Mg(2+).

The catalysed reaction is adenosine(37) in tRNA + dimethylallyl diphosphate = N(6)-dimethylallyladenosine(37) in tRNA + diphosphate. Its function is as follows. Catalyzes the transfer of a dimethylallyl group onto the adenine at position 37 in tRNAs that read codons beginning with uridine, leading to the formation of N6-(dimethylallyl)adenosine (i(6)A). This Dechloromonas aromatica (strain RCB) protein is tRNA dimethylallyltransferase.